A 273-amino-acid chain; its full sequence is 4-hydroxy-tetrahydrodipicolinate reductase (273 aa).

NAD(+) contacts are provided by residues 12–17 (GAGGRM) and E38. R39 lines the NADP(+) pocket. NAD(+) is bound by residues 102–104 (GTT) and 126–129 (AANF). Residue H159 is the Proton donor/acceptor of the active site. H160 provides a ligand contact to (S)-2,3,4,5-tetrahydrodipicolinate. The active-site Proton donor is K163. 169-170 (GT) contacts (S)-2,3,4,5-tetrahydrodipicolinate.

The protein belongs to the DapB family. In terms of assembly, homotetramer.

It localises to the cytoplasm. The catalysed reaction is (S)-2,3,4,5-tetrahydrodipicolinate + NAD(+) + H2O = (2S,4S)-4-hydroxy-2,3,4,5-tetrahydrodipicolinate + NADH + H(+). It catalyses the reaction (S)-2,3,4,5-tetrahydrodipicolinate + NADP(+) + H2O = (2S,4S)-4-hydroxy-2,3,4,5-tetrahydrodipicolinate + NADPH + H(+). Its pathway is amino-acid biosynthesis; L-lysine biosynthesis via DAP pathway; (S)-tetrahydrodipicolinate from L-aspartate: step 4/4. In terms of biological role, catalyzes the conversion of 4-hydroxy-tetrahydrodipicolinate (HTPA) to tetrahydrodipicolinate. The chain is 4-hydroxy-tetrahydrodipicolinate reductase from Escherichia coli O157:H7.